The sequence spans 190 residues: Acyl-acyl carrier protein thioesterase ATL3, chloroplastic (190 aa).

A chloroplast-targeting transit peptide spans Met1–Gly49. The active site involves Asp66.

Belongs to the 4-hydroxybenzoyl-CoA thioesterase family. Highly expressed in stems and flowers and at lower levels in rosette leaves, cauline leaves and siliques.

It is found in the plastid. It localises to the chloroplast. In terms of biological role, acyl-ACP thioesterase involved in the production of fatty acids and beta-keto fatty acids. Can produce fatty acids of long chain (14:1 and 16:1) and beta-keto fatty acids of medium to long chain (8:0, 10:0, 12:0, 12:1, 14:0 and 16:0) when expressed in a heterologous organism (E.coli). Possesses thioesterase activity for lauroyl-ACP (12:0-ACP) in vitro. May play a role in the generation of long fatty acids in the chloroplast. The sequence is that of Acyl-acyl carrier protein thioesterase ATL3, chloroplastic from Arabidopsis thaliana (Mouse-ear cress).